The following is an 87-amino-acid chain: Small ribosomal subunit protein bS16 (87 aa).

Belongs to the bacterial ribosomal protein bS16 family.

The protein is Small ribosomal subunit protein bS16 of Psychrobacter sp. (strain PRwf-1).